The following is a 456-amino-acid chain: Exodeoxyribonuclease 7 large subunit (456 aa).

Belongs to the XseA family. Heterooligomer composed of large and small subunits.

Its subcellular location is the cytoplasm. It catalyses the reaction Exonucleolytic cleavage in either 5'- to 3'- or 3'- to 5'-direction to yield nucleoside 5'-phosphates.. Functionally, bidirectionally degrades single-stranded DNA into large acid-insoluble oligonucleotides, which are then degraded further into small acid-soluble oligonucleotides. This Escherichia coli (strain SE11) protein is Exodeoxyribonuclease 7 large subunit.